The following is a 650-amino-acid chain: DNA gyrase subunit B (650 aa).

Positions 429–543 constitute a Toprim domain; that stretch reads NELFIVEGDS…AGYVYIAQPP (115 aa). Positions 435, 508, and 510 each coordinate Mg(2+).

The protein belongs to the type II topoisomerase GyrB family. In terms of assembly, heterotetramer, composed of two GyrA and two GyrB chains. In the heterotetramer, GyrA contains the active site tyrosine that forms a transient covalent intermediate with DNA, while GyrB binds cofactors and catalyzes ATP hydrolysis. The cofactor is Mg(2+). Requires Mn(2+) as cofactor. Ca(2+) serves as cofactor.

The protein localises to the cytoplasm. It catalyses the reaction ATP-dependent breakage, passage and rejoining of double-stranded DNA.. Functionally, a type II topoisomerase that negatively supercoils closed circular double-stranded (ds) DNA in an ATP-dependent manner to modulate DNA topology and maintain chromosomes in an underwound state. Negative supercoiling favors strand separation, and DNA replication, transcription, recombination and repair, all of which involve strand separation. Also able to catalyze the interconversion of other topological isomers of dsDNA rings, including catenanes and knotted rings. Type II topoisomerases break and join 2 DNA strands simultaneously in an ATP-dependent manner. In Streptococcus pyogenes serotype M3 (strain ATCC BAA-595 / MGAS315), this protein is DNA gyrase subunit B.